The sequence spans 265 residues: Glutamate racemase (265 aa).

Residues 9–10 and 41–42 each bind substrate; these read DS and YS. Cys73 serves as the catalytic Proton donor/acceptor. Position 74-75 (74-75) interacts with substrate; it reads NT. Cys184 serves as the catalytic Proton donor/acceptor. 185–186 serves as a coordination point for substrate; it reads TH.

The protein belongs to the aspartate/glutamate racemases family.

The catalysed reaction is L-glutamate = D-glutamate. It participates in cell wall biogenesis; peptidoglycan biosynthesis. Functionally, provides the (R)-glutamate required for cell wall biosynthesis. This is Glutamate racemase from Haemophilus ducreyi (strain 35000HP / ATCC 700724).